A 458-amino-acid chain; its full sequence is UDP-N-acetylmuramate--L-alanine ligase (458 aa).

118–124 (GTHGKTT) is a binding site for ATP.

It belongs to the MurCDEF family.

The protein resides in the cytoplasm. It carries out the reaction UDP-N-acetyl-alpha-D-muramate + L-alanine + ATP = UDP-N-acetyl-alpha-D-muramoyl-L-alanine + ADP + phosphate + H(+). The protein operates within cell wall biogenesis; peptidoglycan biosynthesis. Functionally, cell wall formation. This chain is UDP-N-acetylmuramate--L-alanine ligase, found in Clostridium botulinum (strain Okra / Type B1).